Here is a 360-residue protein sequence, read N- to C-terminus: Dynein intermediate light chain dil1 (360 aa).

Belongs to the dynein light intermediate chain DYN3 family. In terms of assembly, the dynein complex consists of at least two heavy chains and a number of intermediate and light chains. Interacts with rga3, sec10, sec16, syp1, rvb2, spbc19c7.04c, spbc2f12.05 and spac3a11.10c. Post-translationally, the N-terminal part is acetylated.

Its subcellular location is the cytoplasm. The protein localises to the cytoskeleton. Functionally, component of the cytoplasmic dynein which acts as a motor for the intracellular retrograde motility of vesicles and organelles along microtubules. Promotes oscillatory nuclear movement and efficient pairing of homologous centromeres during meiotic prophase. In Schizosaccharomyces pombe (strain 972 / ATCC 24843) (Fission yeast), this protein is Dynein intermediate light chain dil1 (dil1).